Consider the following 338-residue polypeptide: UDP-3-O-acylglucosamine N-acyltransferase (338 aa).

Histidine 239 functions as the Proton acceptor in the catalytic mechanism.

It belongs to the transferase hexapeptide repeat family. LpxD subfamily. In terms of assembly, homotrimer.

It carries out the reaction a UDP-3-O-[(3R)-3-hydroxyacyl]-alpha-D-glucosamine + a (3R)-hydroxyacyl-[ACP] = a UDP-2-N,3-O-bis[(3R)-3-hydroxyacyl]-alpha-D-glucosamine + holo-[ACP] + H(+). The protein operates within bacterial outer membrane biogenesis; LPS lipid A biosynthesis. Catalyzes the N-acylation of UDP-3-O-acylglucosamine using 3-hydroxyacyl-ACP as the acyl donor. Is involved in the biosynthesis of lipid A, a phosphorylated glycolipid that anchors the lipopolysaccharide to the outer membrane of the cell. This chain is UDP-3-O-acylglucosamine N-acyltransferase, found in Thermosynechococcus vestitus (strain NIES-2133 / IAM M-273 / BP-1).